The following is a 481-amino-acid chain: DNA primase DnaG (481 aa).

Residues aspartate 169–aspartate 243 form the Toprim domain. The Mg(2+) site is built by glutamate 175, aspartate 217, and aspartate 219. Positions arginine 275 to phenylalanine 393 are disordered. Positions alanine 281–glutamine 309 are enriched in low complexity. Over residues tyrosine 312 to phenylalanine 393 the composition is skewed to basic and acidic residues.

Belongs to the archaeal DnaG primase family. Forms a ternary complex with MCM helicase and DNA. Component of the archaeal exosome complex. Mg(2+) is required as a cofactor.

The enzyme catalyses ssDNA + n NTP = ssDNA/pppN(pN)n-1 hybrid + (n-1) diphosphate.. In terms of biological role, RNA polymerase that catalyzes the synthesis of short RNA molecules used as primers for DNA polymerase during DNA replication. Also part of the exosome, which is a complex involved in RNA degradation. Acts as a poly(A)-binding protein that enhances the interaction between heteromeric, adenine-rich transcripts and the exosome. In Methanocella arvoryzae (strain DSM 22066 / NBRC 105507 / MRE50), this protein is DNA primase DnaG.